The sequence spans 308 residues: Nodulation protein D 1 (308 aa).

The HTH lysR-type domain occupies Leu6 to Thr63. Positions Leu23–Ala42 form a DNA-binding region, H-T-H motif.

The protein belongs to the LysR transcriptional regulatory family.

Its function is as follows. NodD regulates the expression of the nodABCFE genes which encode other nodulation proteins. NodD is also a negative regulator of its own expression. Binds flavonoids as inducers. This is Nodulation protein D 1 (nodD1) from Rhizobium meliloti (strain 1021) (Ensifer meliloti).